The following is a 1012-amino-acid chain: Alanine--tRNA ligase, mitochondrial (1012 aa).

A mitochondrion-targeting transit peptide spans 1–24 (MYNSAKQLQRVLTAREIRKTFLDH). Zn(2+) is bound by residues histidine 656, histidine 660, cysteine 766, and histidine 770.

Belongs to the class-II aminoacyl-tRNA synthetase family. Monomer. Zn(2+) serves as cofactor.

It is found in the mitochondrion. It carries out the reaction tRNA(Ala) + L-alanine + ATP = L-alanyl-tRNA(Ala) + AMP + diphosphate. Catalyzes the attachment of alanine to tRNA(Ala) in a two-step reaction: alanine is first activated by ATP to form Ala-AMP and then transferred to the acceptor end of tRNA(Ala). Also edits incorrectly charged tRNA(Ala) via its editing domain. The chain is Alanine--tRNA ligase, mitochondrial from Drosophila melanogaster (Fruit fly).